The sequence spans 248 residues: Putative eukaryotic initiation factor 4A-like protein (248 aa).

A Q motif motif is present at residues 14-42 (VGFASLGLNEQLINNIKRYGITKLTPFQM). Positions 45-239 (IKEIKENSNV…NTFIKIPKII (195 aa)) constitute a Helicase ATP-binding domain. 58-65 (SIEGTGRT) provides a ligand contact to ATP. The DEAD box signature appears at 185–188 (DELD).

It belongs to the DEAD box helicase family. eIF4A subfamily.

The protein is Putative eukaryotic initiation factor 4A-like protein of Dictyostelium discoideum (Social amoeba).